The primary structure comprises 312 residues: Light-independent protochlorophyllide reductase iron-sulfur ATP-binding protein (312 aa).

ATP-binding positions include 55-60 and lysine 84; that span reads GIGKST. Serine 59 contacts Mg(2+). The [4Fe-4S] cluster site is built by cysteine 140 and cysteine 174. Residues 225-226 and 249-251 contribute to the ATP site; these read NR and PDL.

The protein belongs to the NifH/BchL/ChlL family. Homodimer. Protochlorophyllide reductase is composed of three subunits; BchL, BchN and BchB. [4Fe-4S] cluster is required as a cofactor.

The enzyme catalyses chlorophyllide a + oxidized 2[4Fe-4S]-[ferredoxin] + 2 ADP + 2 phosphate = protochlorophyllide a + reduced 2[4Fe-4S]-[ferredoxin] + 2 ATP + 2 H2O. The protein operates within porphyrin-containing compound metabolism; bacteriochlorophyll biosynthesis (light-independent). Its function is as follows. Component of the dark-operative protochlorophyllide reductase (DPOR) that uses Mg-ATP and reduced ferredoxin to reduce ring D of protochlorophyllide (Pchlide) to form chlorophyllide a (Chlide). This reaction is light-independent. The L component serves as a unique electron donor to the NB-component of the complex, and binds Mg-ATP. The protein is Light-independent protochlorophyllide reductase iron-sulfur ATP-binding protein of Rhodopseudomonas palustris (strain HaA2).